Here is a 1169-residue protein sequence, read N- to C-terminus: Transcription-repair-coupling factor (1169 aa).

One can recognise a Helicase ATP-binding domain in the interval Asp634–Ile795. Gly647 to Thr654 is a binding site for ATP. Positions Asp748–Gln751 match the DEEQ box motif. The Helicase C-terminal domain maps to Val809–Asn970.

In the N-terminal section; belongs to the UvrB family. This sequence in the C-terminal section; belongs to the helicase family. RecG subfamily.

The protein resides in the cytoplasm. In terms of biological role, couples transcription and DNA repair by recognizing RNA polymerase (RNAP) stalled at DNA lesions. Mediates ATP-dependent release of RNAP and its truncated transcript from the DNA, and recruitment of nucleotide excision repair machinery to the damaged site. This chain is Transcription-repair-coupling factor, found in Staphylococcus epidermidis (strain ATCC 35984 / DSM 28319 / BCRC 17069 / CCUG 31568 / BM 3577 / RP62A).